The chain runs to 159 residues: Regulatory protein RecX (159 aa).

Belongs to the RecX family.

It is found in the cytoplasm. Modulates RecA activity. This Ralstonia pickettii (strain 12J) protein is Regulatory protein RecX.